We begin with the raw amino-acid sequence, 260 residues long: Cobalt transport protein CbiM (260 aa).

The signal sequence occupies residues 1–34 (MKLGESMKKNATLSVKIIAFLGVLIFTVMPVANA). The next 6 membrane-spanning stretches (helical) occupy residues 39–59 (EGYL…PFLI), 77–97 (LLFA…LPSF), 109–129 (LSTI…VLLF), 132–152 (LLLA…MAVM), 175–195 (IFFS…IQLG), and 215–235 (VFAI…VLIF).

It belongs to the CbiM family. As to quaternary structure, forms an energy-coupling factor (ECF) transporter complex composed of an ATP-binding protein (A component, CbiO), a transmembrane protein (T component, CbiQ) and 2 possible substrate-capture proteins (S components, CbiM and CbiN) of unknown stoichimetry.

Its subcellular location is the cell membrane. It participates in cofactor biosynthesis; adenosylcobalamin biosynthesis. Its function is as follows. Part of the energy-coupling factor (ECF) transporter complex CbiMNOQ involved in cobalt import. In Clostridium cellulovorans (strain ATCC 35296 / DSM 3052 / OCM 3 / 743B), this protein is Cobalt transport protein CbiM.